The chain runs to 399 residues: Phosphoglycerate kinase (399 aa).

Substrate-binding positions include 21–23, Arg-36, 59–62, Arg-120, and Arg-158; these read DFN and HLGR. Residues Lys-209, Gly-297, Glu-328, and 355–358 contribute to the ATP site; that span reads GGDS.

It belongs to the phosphoglycerate kinase family. Monomer.

It localises to the cytoplasm. The catalysed reaction is (2R)-3-phosphoglycerate + ATP = (2R)-3-phospho-glyceroyl phosphate + ADP. The protein operates within carbohydrate degradation; glycolysis; pyruvate from D-glyceraldehyde 3-phosphate: step 2/5. The polypeptide is Phosphoglycerate kinase (Streptococcus thermophilus (strain CNRZ 1066)).